We begin with the raw amino-acid sequence, 115 residues long: Probable non-functional T cell receptor beta variable 23-1 (115 aa).

The N-terminal stretch at 1–21 (MGTRLLGCAALCLLAADSFHA) is a signal peptide. Positions 22-115 (KVTQTPGHLV…TALYLCASSQ (94 aa)) constitute an Ig-like domain. Cys-42 and Cys-111 are disulfide-bonded.

In terms of assembly, alpha-beta TR is a heterodimer composed of an alpha and beta chain; disulfide-linked. The alpha-beta TR is associated with the transmembrane signaling CD3 coreceptor proteins to form the TR-CD3 (TcR or TCR). The assembly of alpha-beta TR heterodimers with CD3 occurs in the endoplasmic reticulum where a single alpha-beta TR heterodimer associates with one CD3D-CD3E heterodimer, one CD3G-CD3E heterodimer and one CD247 homodimer forming a stable octameric structure. CD3D-CD3E and CD3G-CD3E heterodimers preferentially associate with TR alpha and TR beta chains, respectively. The association of the CD247 homodimer is the last step of TcR assembly in the endoplasmic reticulum and is required for transport to the cell surface.

The protein resides in the cell membrane. Probable non-functional open reading frame (ORF) of V region of the variable domain of T cell receptor (TR) beta chain. Non-functional ORF generally cannot participate in the synthesis of a productive T cell receptor (TR) chain due to altered V-(D)-J or switch recombination and/or splicing site (at mRNA level) and/or conserved amino acid change (protein level). Alpha-beta T cell receptors are antigen specific receptors which are essential to the immune response and are present on the cell surface of T lymphocytes. Recognize peptide-major histocompatibility (MH) (pMH) complexes that are displayed by antigen presenting cells (APC), a prerequisite for efficient T cell adaptive immunity against pathogens. Binding of alpha-beta TR to pMH complex initiates TR-CD3 clustering on the cell surface and intracellular activation of LCK that phosphorylates the ITAM motifs of CD3G, CD3D, CD3E and CD247 enabling the recruitment of ZAP70. In turn ZAP70 phosphorylates LAT, which recruits numerous signaling molecules to form the LAT signalosome. The LAT signalosome propagates signal branching to three major signaling pathways, the calcium, the mitogen-activated protein kinase (MAPK) kinase and the nuclear factor NF-kappa-B (NF-kB) pathways, leading to the mobilization of transcription factors that are critical for gene expression and essential for T cell growth and differentiation. The T cell repertoire is generated in the thymus, by V-(D)-J rearrangement. This repertoire is then shaped by intrathymic selection events to generate a peripheral T cell pool of self-MH restricted, non-autoaggressive T cells. Post-thymic interaction of alpha-beta TR with the pMH complexes shapes TR structural and functional avidity. The sequence is that of Probable non-functional T cell receptor beta variable 23-1 from Homo sapiens (Human).